The primary structure comprises 73 residues: Biotin/lipoyl attachment protein (73 aa).

In terms of domain architecture, Biotinyl-binding spans 2-69; it reads TVSIQMAGNL…NEGDVLLELS (68 aa). Position 35 is an N6-biotinyllysine; alternate (Lys35). The residue at position 35 (Lys35) is an N6-lipoyllysine; alternate.

Post-translationally, can be both biotinylated and lipoylated on Lys-35 upon overexpression in E.coli depending on the growth medium; the nature of the modification in situ in B.subtilis is unknown.

The sequence is that of Biotin/lipoyl attachment protein (yngHB) from Bacillus subtilis (strain 168).